Reading from the N-terminus, the 289-residue chain is Putative 2-aminoethylphosphonate transport system permease protein PhnU (289 aa).

A run of 6 helical transmembrane segments spans residues 19-39 (WLLL…SLIV), 76-96 (FFAT…LVFI), 111-131 (FIAL…GSAG), 150-170 (FLYS…PLVM), 202-222 (VIFP…LLLT), and 254-274 (YTVA…LFSL). Residues 68 to 275 (LLNTLQIAFF…VLSLGLFSLY (208 aa)) enclose the ABC transmembrane type-1 domain.

This sequence belongs to the binding-protein-dependent transport system permease family.

The protein resides in the cell inner membrane. Functionally, probably part of the PhnSTUV complex (TC 3.A.1.11.5) involved in 2-aminoethylphosphonate import. Probably responsible for the translocation of the substrate across the membrane. The protein is Putative 2-aminoethylphosphonate transport system permease protein PhnU (phnU) of Salmonella typhi.